Reading from the N-terminus, the 525-residue chain is Peptide chain release factor 3 (525 aa).

The 269-residue stretch at 8–276 folds into the tr-type G domain; sequence AMRRTFAIIS…AFVKEAPPPQ (269 aa). Residues 17–24, 85–89, and 139–142 each bind GTP; these read SHPDAGKT, DTPGH, and NKMD.

The protein belongs to the TRAFAC class translation factor GTPase superfamily. Classic translation factor GTPase family. PrfC subfamily.

The protein localises to the cytoplasm. Its function is as follows. Increases the formation of ribosomal termination complexes and stimulates activities of RF-1 and RF-2. It binds guanine nucleotides and has strong preference for UGA stop codons. It may interact directly with the ribosome. The stimulation of RF-1 and RF-2 is significantly reduced by GTP and GDP, but not by GMP. The sequence is that of Peptide chain release factor 3 from Coxiella burnetii (strain RSA 331 / Henzerling II).